A 502-amino-acid polypeptide reads, in one-letter code: Cytochrome c-552 (502 aa).

The N-terminal stretch at 1-25 (MKYLTKSRVIATIAMLGCLSVSAWA) is a signal peptide. Position 105 (His-105) interacts with heme c. Heme contacts are provided by Cys-133, Cys-136, and Lys-137. Cys-171, Cys-174, His-175, Cys-220, Cys-223, and His-224 together coordinate heme c. Ca(2+) is bound by residues Glu-226, Tyr-227, Lys-271, and Gln-273. Tyr-227 is a substrate binding site. Residue His-274 coordinates substrate. Heme c contacts are provided by His-285, Cys-292, Cys-295, His-296, His-311, Cys-324, Cys-327, His-328, and His-403. Residues 481 to 502 (RERGLLPEVTPKSVTTPKVDAK) are disordered.

It belongs to the cytochrome c-552 family. It depends on Ca(2+) as a cofactor. The cofactor is heme c.

The protein localises to the periplasm. The catalysed reaction is 6 Fe(III)-[cytochrome c] + NH4(+) + 2 H2O = 6 Fe(II)-[cytochrome c] + nitrite + 8 H(+). Its pathway is nitrogen metabolism; nitrate reduction (assimilation). Functionally, catalyzes the reduction of nitrite to ammonia, consuming six electrons in the process. In Haemophilus ducreyi (strain 35000HP / ATCC 700724), this protein is Cytochrome c-552.